The sequence spans 353 residues: Glutamine synthetase nodule isozyme (353 aa).

Residues 19 to 99 (IIAEYIWVGG…VMCDTYTPAG (81 aa)) enclose the GS beta-grasp domain. The GS catalytic domain maps to 106–353 (KRHAAAKIFS…TSMIAETTLL (248 aa)).

The protein belongs to the glutamine synthetase family. Homooctamer.

Its subcellular location is the cytoplasm. It catalyses the reaction L-glutamate + NH4(+) + ATP = L-glutamine + ADP + phosphate + H(+). The chain is Glutamine synthetase nodule isozyme from Lupinus luteus (European yellow lupine).